Reading from the N-terminus, the 418-residue chain is Tyrosine--tRNA ligase (418 aa).

Residue Y34 participates in L-tyrosine binding. Positions 39–48 match the 'HIGH' region motif; it reads PTADSLHLGH. L-tyrosine-binding residues include Y169 and Q173. The short motif at 229 to 233 is the 'KMSKS' region element; it reads KFGKS. K232 contacts ATP. Positions 352–418 constitute an S4 RNA-binding domain; it reads NNIVELLVSS…GKKKYFVLTY (67 aa).

Belongs to the class-I aminoacyl-tRNA synthetase family. TyrS type 1 subfamily. Homodimer.

Its subcellular location is the cytoplasm. It carries out the reaction tRNA(Tyr) + L-tyrosine + ATP = L-tyrosyl-tRNA(Tyr) + AMP + diphosphate + H(+). In terms of biological role, catalyzes the attachment of tyrosine to tRNA(Tyr) in a two-step reaction: tyrosine is first activated by ATP to form Tyr-AMP and then transferred to the acceptor end of tRNA(Tyr). The polypeptide is Tyrosine--tRNA ligase (Streptococcus pneumoniae (strain 70585)).